Consider the following 723-residue polypeptide: Methionine--tRNA ligase (723 aa).

The 'HIGH' region signature appears at 11 to 21; it reads PYANGPIHAGH. Zn(2+) contacts are provided by Cys143, Cys146, Cys156, and Cys159. Residues 344–348 carry the 'KMSKS' region motif; that stretch reads KFSTS. Thr347 is an ATP binding site. Residues 623 to 723 form the tRNA-binding domain; sequence DFAKLDLRVG…KEVKLGAKVR (101 aa).

Belongs to the class-I aminoacyl-tRNA synthetase family. MetG type 1 subfamily. In terms of assembly, homodimer. Zn(2+) is required as a cofactor.

The protein resides in the cytoplasm. The enzyme catalyses tRNA(Met) + L-methionine + ATP = L-methionyl-tRNA(Met) + AMP + diphosphate. Functionally, is required not only for elongation of protein synthesis but also for the initiation of all mRNA translation through initiator tRNA(fMet) aminoacylation. In Pyrococcus horikoshii (strain ATCC 700860 / DSM 12428 / JCM 9974 / NBRC 100139 / OT-3), this protein is Methionine--tRNA ligase.